A 334-amino-acid polypeptide reads, in one-letter code: Zinc finger Ran-binding domain-containing protein 2 (334 aa).

RanBP2-type zinc fingers lie at residues 9–40 (SDGD…EKTT) and 65–94 (SAND…PKYA). Residues 117–334 (REESDGEYDE…SGSRTSSKKK (218 aa)) form a disordered region. A compositionally biased stretch (acidic residues) spans 150-163 (DKESEGEDEEDEDG). Positions 196–212 (KKKKSNRRSRSKSRSSH) are enriched in basic residues. Low complexity-rich tracts occupy residues 213 to 224 (SRSSSRSSSHSS) and 258 to 285 (SRSS…SSSP). Residues 302–318 (RKKRRSRSRSPERRRRS) show a composition bias toward basic residues. Residues 319 to 334 (SSGSSHSGSRTSSKKK) show a composition bias toward low complexity.

It belongs to the ZRANB2 family.

It localises to the nucleus. In terms of biological role, may regulate alternative splicing by interfering with constitutive 5'-splice site selection. This Gallus gallus (Chicken) protein is Zinc finger Ran-binding domain-containing protein 2.